Consider the following 518-residue polypeptide: Maturase K (518 aa).

This sequence belongs to the intron maturase 2 family. MatK subfamily.

Its subcellular location is the plastid. The protein resides in the chloroplast. Usually encoded in the trnK tRNA gene intron. Probably assists in splicing its own and other chloroplast group II introns. This is Maturase K from Syzygium cumini (Java plum).